Reading from the N-terminus, the 544-residue chain is MAKDIKFSEEARRSMLRGVDTLANAVKVTLGPKGRNVVLEKKFGSPLITNDGVTIAKEIELEDAFENMGAKLVAEVASKTNDVAGDGTTTATVLAQAMIREGLKNVTAGANPMGLRKGIEKAVTAAIEELKTISKPIEGKSSIAQVAAISAADEEVGQLIAEAMERVGNDGVITLEESKGFTTELDVVEGMQFDRGYASPYMITDSDKMEAVLDNPYILITDKKISNIQEILPVLEQVVQQGKPLLIIAEDVEGEALATLVVNKLRGTFNVVAVKAPGFGDRRKAMLEDIAILTGGEVITEELGRDLKSATVESLGRAGKVVVTKENTTVVEGVGSTEQIEARIGQIRAQLEETTSEFDREKLQERLAKLAGGVAVIKVGAATETELKERKLRIEDALNSTRAAVEEGIVAGGGTSLMNVYTKVASIVAEGDEATGINIVLRALEEPVRQIAINAGLEGSVVVERLKGEKVGVGFNAATGEWVNMLESGIVDPAKVTRSALQNAASVAAMFLTTEAVVADKPEPNAPAMPDMGGMGMGGMGGMM.

Residues 29–32, 86–90, glycine 413, 476–478, and aspartate 492 each bind ATP; these read TLGP, DGTTT, and NAA.

This sequence belongs to the chaperonin (HSP60) family. In terms of assembly, forms a cylinder of 14 subunits composed of two heptameric rings stacked back-to-back. Interacts with the co-chaperonin GroES.

It is found in the cytoplasm. The enzyme catalyses ATP + H2O + a folded polypeptide = ADP + phosphate + an unfolded polypeptide.. Functionally, together with its co-chaperonin GroES, plays an essential role in assisting protein folding. The GroEL-GroES system forms a nano-cage that allows encapsulation of the non-native substrate proteins and provides a physical environment optimized to promote and accelerate protein folding. This Bacillus cereus (strain B4264) protein is Chaperonin GroEL.